Here is a 546-residue protein sequence, read N- to C-terminus: CTP synthase (546 aa).

The interval 1–266 (MTTNYIFVTG…DDLVCARFGI (266 aa)) is amidoligase domain. Ser14 lines the CTP pocket. Ser14 provides a ligand contact to UTP. ATP is bound by residues 15-20 (SLGKGI) and Asp72. 2 residues coordinate Mg(2+): Asp72 and Glu140. CTP-binding positions include 147–149 (DIE), 187–192 (KTKPTQ), and Lys223. UTP is bound by residues 187–192 (KTKPTQ) and Lys223. 239 to 241 (KDV) serves as a coordination point for ATP. The region spanning 291 to 542 (TIGMVGKYIE…VKAAGQNARG (252 aa)) is the Glutamine amidotransferase type-1 domain. Position 352 (Gly352) interacts with L-glutamine. The active-site Nucleophile; for glutamine hydrolysis is the Cys379. L-glutamine contacts are provided by residues 380–383 (LGMQ), Glu403, and Arg470. Residues His515 and Glu517 contribute to the active site.

The protein belongs to the CTP synthase family. Homotetramer.

The catalysed reaction is UTP + L-glutamine + ATP + H2O = CTP + L-glutamate + ADP + phosphate + 2 H(+). The enzyme catalyses L-glutamine + H2O = L-glutamate + NH4(+). It carries out the reaction UTP + NH4(+) + ATP = CTP + ADP + phosphate + 2 H(+). The protein operates within pyrimidine metabolism; CTP biosynthesis via de novo pathway; CTP from UDP: step 2/2. With respect to regulation, allosterically activated by GTP, when glutamine is the substrate; GTP has no effect on the reaction when ammonia is the substrate. The allosteric effector GTP functions by stabilizing the protein conformation that binds the tetrahedral intermediate(s) formed during glutamine hydrolysis. Inhibited by the product CTP, via allosteric rather than competitive inhibition. Catalyzes the ATP-dependent amination of UTP to CTP with either L-glutamine or ammonia as the source of nitrogen. Regulates intracellular CTP levels through interactions with the four ribonucleotide triphosphates. This is CTP synthase from Vibrio campbellii (strain ATCC BAA-1116).